A 362-amino-acid chain; its full sequence is Carbamoyl phosphate synthase small chain (362 aa).

The segment at 1–172 is CPSase; that stretch reads MKAFLVLDNG…SKYIFGTHTG (172 aa). Residues serine 45, glycine 224, and glycine 226 each contribute to the L-glutamine site. Residues 176–362 enclose the Glutamine amidotransferase type-1 domain; sequence KLAVYDYGVK…YDLVEKTKKG (187 aa). The active-site Nucleophile is the cysteine 252. L-glutamine is bound by residues leucine 253, glutamine 256, asparagine 294, glycine 296, and phenylalanine 297. Active-site residues include histidine 335 and glutamate 337.

The protein belongs to the CarA family. As to quaternary structure, composed of two chains; the small (or glutamine) chain promotes the hydrolysis of glutamine to ammonia, which is used by the large (or ammonia) chain to synthesize carbamoyl phosphate. Tetramer of heterodimers (alpha,beta)4.

The enzyme catalyses hydrogencarbonate + L-glutamine + 2 ATP + H2O = carbamoyl phosphate + L-glutamate + 2 ADP + phosphate + 2 H(+). The catalysed reaction is L-glutamine + H2O = L-glutamate + NH4(+). It participates in amino-acid biosynthesis; L-arginine biosynthesis; carbamoyl phosphate from bicarbonate: step 1/1. It functions in the pathway pyrimidine metabolism; UMP biosynthesis via de novo pathway; (S)-dihydroorotate from bicarbonate: step 1/3. Its function is as follows. Small subunit of the glutamine-dependent carbamoyl phosphate synthetase (CPSase). CPSase catalyzes the formation of carbamoyl phosphate from the ammonia moiety of glutamine, carbonate, and phosphate donated by ATP, constituting the first step of 2 biosynthetic pathways, one leading to arginine and/or urea and the other to pyrimidine nucleotides. The small subunit (glutamine amidotransferase) binds and cleaves glutamine to supply the large subunit with the substrate ammonia. This Leptospira interrogans serogroup Icterohaemorrhagiae serovar Lai (strain 56601) protein is Carbamoyl phosphate synthase small chain.